We begin with the raw amino-acid sequence, 229 residues long: Phosphatidylinositol N-acetylglucosaminyltransferase subunit GPI15 (229 aa).

2 consecutive transmembrane segments (helical) span residues isoleucine 59–leucine 79 and isoleucine 101–valine 121.

It belongs to the PIGH family. Component of the phosphatidylinositol N-acetylglucosaminyltransferase (GPI-GlcNAc transferase) complex composed of at least GPI1, GPI2, GPI3, GPI15, GPI19 and ERI1.

It localises to the membrane. The enzyme catalyses a 1,2-diacyl-sn-glycero-3-phospho-(1D-myo-inositol) + UDP-N-acetyl-alpha-D-glucosamine = a 6-(N-acetyl-alpha-D-glucosaminyl)-1-(1,2-diacyl-sn-glycero-3-phospho)-1D-myo-inositol + UDP + H(+). It functions in the pathway glycolipid biosynthesis; glycosylphosphatidylinositol-anchor biosynthesis. Part of the complex catalyzing the transfer of N-acetylglucosamine from UDP-N-acetylglucosamine to phosphatidylinositol, the first step of GPI biosynthesis. This is Phosphatidylinositol N-acetylglucosaminyltransferase subunit GPI15 (GPI15) from Saccharomyces cerevisiae (strain ATCC 204508 / S288c) (Baker's yeast).